Consider the following 368-residue polypeptide: Decarboxylase yanB (368 aa).

His-7, His-9, and His-159 together coordinate Zn(2+). Asn-169 carries an N-linked (GlcNAc...) asparagine glycan. Asp-283 lines the Zn(2+) pocket. The helical transmembrane segment at 339 to 359 (WGAFSACLLLPVGLSALYSVL) threads the bilayer.

This sequence belongs to the metallo-dependent hydrolases superfamily. ACMSD family.

It is found in the membrane. The enzyme catalyses 6-methylsalicylate + H(+) = 3-methylphenol + CO2. The protein operates within secondary metabolite biosynthesis; terpenoid biosynthesis. Functionally, decarboxylase; part of the gene cluster that mediates the biosynthesis of yanuthone D, a fungal isoprenoid epoxycyclohexenone that acts as an antibiotic against fungi and bacteria. The first step of the pathway is the synthesis of 6-methylsalicylic acid (6-MSA) by the polyketide synthase yanA. 6-MSA is then converted to m-cresol by the decarboxylase yanB. The cytochrome P450 monooxygenase yanC then catalyzes the oxidation of m-cresol to toluquinol. Epoxidation of toluquinol is then performed by the short chain dehydrogenase yanD, with the help of yanE, and a further prenylation by yanG leads to 7-deacetoxyyanuthone A. The next step is the hydroxylation of C-22 of 7-deacetoxyyanuthone A by the cytochrome P450 monooxygenase yanH to yield 22-deacetylyanuthone A. O-Mevalon transferase yanI then attaches mevalon to the hydroxyl group of 22-deacetylyanuthone A to produce yanuthone E. Finally, the FAD-dependent monooxygenase yanF oxidizes the hydroxyl group at C15 of yanuthone E to form yanuthone D. Furthermore, several branching points in the pathway lead to the production of yanuthones F and G from 7-deacetoxyyanuthone A; yanuthones H and I from 22-deacetylyanuthone A; and yanuthone J from yanuthone E. This Aspergillus niger (strain ATCC 1015 / CBS 113.46 / FGSC A1144 / LSHB Ac4 / NCTC 3858a / NRRL 328 / USDA 3528.7) protein is Decarboxylase yanB.